The chain runs to 277 residues: Acyl-coenzyme A thioesterase MBLAC2 (277 aa).

Zn(2+) contacts are provided by His-80, His-82, Asp-84, His-85, His-167, Asp-186, and His-228.

The protein belongs to the metallo-beta-lactamase superfamily. Glyoxalase II family. Requires Zn(2+) as cofactor.

It localises to the endoplasmic reticulum membrane. Its subcellular location is the cell membrane. The catalysed reaction is hexadecanoyl-CoA + H2O = hexadecanoate + CoA + H(+). It carries out the reaction dodecanoyl-CoA + H2O = dodecanoate + CoA + H(+). The enzyme catalyses tetradecanoyl-CoA + H2O = tetradecanoate + CoA + H(+). It catalyses the reaction octadecanoyl-CoA + H2O = octadecanoate + CoA + H(+). The catalysed reaction is a beta-lactam + H2O = a substituted beta-amino acid. Acyl-CoA thioesterases are a group of enzymes that catalyze the hydrolysis of acyl-CoAs to the free fatty acid and coenzyme A (CoASH), providing the potential to regulate intracellular levels of acyl-CoAs, free fatty acids and CoASH. Has an acyl-CoA thioesterase activity towards the long chain fatty acyl-CoA thioester palmitoyl-CoA (hexadecanoyl-CoA; C16:0-CoA). Displays a substrate preference for fatty acyl-CoAs with chain-lengths C12-C18. In Gallus gallus (Chicken), this protein is Acyl-coenzyme A thioesterase MBLAC2 (MBLAC2).